We begin with the raw amino-acid sequence, 607 residues long: LRR receptor kinase SERK2 (607 aa).

A signal peptide spans Met-1 to Ser-21. The Extracellular segment spans residues Asp-22 to Gly-219. N-linked (GlcNAc...) asparagine glycosylation is found at Asn-36 and Asn-110. 4 LRR repeats span residues Leu-87–Asn-110, Leu-111–Leu-135, Ser-136–Ile-159, and Ser-160–Val-183. N-linked (GlcNAc...) asparagine glycans are attached at residues Asn-149, Asn-171, Asn-187, and Asn-206. The helical transmembrane segment at Ile-220 to Phe-240 threads the bilayer. The Cytoplasmic segment spans residues Cys-241–Arg-607. The Protein kinase domain occupies Phe-284 to Leu-563. ATP is bound by residues Leu-290–Val-298 and Lys-312. The active-site Proton acceptor is the Asp-411.

This sequence belongs to the protein kinase superfamily. Ser/Thr protein kinase family.

The protein resides in the cell membrane. The catalysed reaction is L-seryl-[protein] + ATP = O-phospho-L-seryl-[protein] + ADP + H(+). The enzyme catalyses L-threonyl-[protein] + ATP = O-phospho-L-threonyl-[protein] + ADP + H(+). In terms of biological role, may be involved in the regulation of plant growth through the brassinosteroid (BR) signaling pathway. This is LRR receptor kinase SERK2 from Oryza sativa subsp. japonica (Rice).